The primary structure comprises 558 residues: Thermosome subunit alpha (558 aa).

A disordered region spans residues 536 to 558 (TEKGKKEGGEGAGAETPGAPSLE). Residues 548–558 (GAETPGAPSLE) are compositionally biased toward low complexity.

Belongs to the TCP-1 chaperonin family. In terms of assembly, forms a Heterooligomeric complex of two stacked eight-membered rings.

In terms of biological role, molecular chaperone; binds unfolded polypeptides in vitro, and has a weak ATPase activity. The chain is Thermosome subunit alpha (thsA) from Sulfolobus acidocaldarius (strain ATCC 33909 / DSM 639 / JCM 8929 / NBRC 15157 / NCIMB 11770).